Consider the following 469-residue polypeptide: Glutamate--tRNA ligase (469 aa).

Positions Pro-9–Gly-19 match the 'HIGH' region motif. Cys-98, Cys-100, Cys-125, and Asp-127 together coordinate Zn(2+). The short motif at Lys-236–Arg-240 is the 'KMSKS' region element. Lys-239 serves as a coordination point for ATP.

Belongs to the class-I aminoacyl-tRNA synthetase family. Glutamate--tRNA ligase type 1 subfamily. As to quaternary structure, monomer. The cofactor is Zn(2+).

It is found in the cytoplasm. The catalysed reaction is tRNA(Glu) + L-glutamate + ATP = L-glutamyl-tRNA(Glu) + AMP + diphosphate. Functionally, catalyzes the attachment of glutamate to tRNA(Glu) in a two-step reaction: glutamate is first activated by ATP to form Glu-AMP and then transferred to the acceptor end of tRNA(Glu). The chain is Glutamate--tRNA ligase from Shewanella woodyi (strain ATCC 51908 / MS32).